Consider the following 29-residue polypeptide: Brevinin-2Ee (29 aa).

A disulfide bond links Cys23 and Cys29.

It belongs to the frog skin active peptide (FSAP) family. Brevinin subfamily. In terms of tissue distribution, expressed by the skin glands.

Its subcellular location is the secreted. Shows antibacterial activity against representative Gram-negative and Gram-positive bacterial species, and hemolytic activity. The sequence is that of Brevinin-2Ee from Pelophylax lessonae (Pool frog).